The following is a 93-amino-acid chain: Large ribosomal subunit protein bL27 (93 aa).

A propeptide spanning residues 1 to 10 (MRFLLGLQYF) is cleaved from the precursor. The segment at 14–36 (KGVGSTKNGRDSESKRLGAKKSD) is disordered. The span at 21–36 (NGRDSESKRLGAKKSD) shows a compositional bias: basic and acidic residues.

This sequence belongs to the bacterial ribosomal protein bL27 family. Post-translationally, the N-terminus is cleaved by ribosomal processing cysteine protease Prp.

In Mycoplasma capricolum subsp. capricolum (strain California kid / ATCC 27343 / NCTC 10154), this protein is Large ribosomal subunit protein bL27.